The sequence spans 297 residues: Undecaprenyl-diphosphatase (297 aa).

The next 7 membrane-spanning stretches (helical) occupy residues 39–59 (PGAA…LIYF), 85–105 (ARLA…GLTL), 113–133 (FRSL…LLVV), 151–171 (GILI…RSGT), 190–210 (SFLL…KHLL), 220–240 (ALWV…AWLL), and 249–269 (LVFV…LQTG).

It belongs to the UppP family.

Its subcellular location is the cell inner membrane. The catalysed reaction is di-trans,octa-cis-undecaprenyl diphosphate + H2O = di-trans,octa-cis-undecaprenyl phosphate + phosphate + H(+). Functionally, catalyzes the dephosphorylation of undecaprenyl diphosphate (UPP). Confers resistance to bacitracin. This is Undecaprenyl-diphosphatase from Myxococcus xanthus (strain DK1622).